The following is a 352-amino-acid chain: Farnesyl pyrophosphate synthase (352 aa).

The isopentenyl diphosphate site is built by Lys52, Arg55, and Gln93. 2 residues coordinate Mg(2+): Asp100 and Asp104. Residue Arg109 coordinates dimethylallyl diphosphate. An isopentenyl diphosphate-binding site is contributed by Arg110. Residues Lys197, Thr198, Gln237, Lys254, and Lys263 each coordinate dimethylallyl diphosphate.

This sequence belongs to the FPP/GGPP synthase family. Requires Mg(2+) as cofactor.

The catalysed reaction is isopentenyl diphosphate + dimethylallyl diphosphate = (2E)-geranyl diphosphate + diphosphate. The enzyme catalyses isopentenyl diphosphate + (2E)-geranyl diphosphate = (2E,6E)-farnesyl diphosphate + diphosphate. It functions in the pathway isoprenoid biosynthesis; farnesyl diphosphate biosynthesis; farnesyl diphosphate from geranyl diphosphate and isopentenyl diphosphate: step 1/1. Its pathway is isoprenoid biosynthesis; geranyl diphosphate biosynthesis; geranyl diphosphate from dimethylallyl diphosphate and isopentenyl diphosphate: step 1/1. Its function is as follows. Farnesyl pyrophosphate synthase; part of the second module of ergosterol biosynthesis pathway that includes the middle steps of the pathway. ERG20 catalyzes the sequential condensation of isopentenyl pyrophosphate with dimethylallyl pyrophosphate, and then with the resultant geranylpyrophosphate to the ultimate product farnesyl pyrophosphate. The second module is carried out in the vacuole and involves the formation of farnesyl diphosphate, which is also an important intermediate in the biosynthesis of ubiquinone, dolichol, heme and prenylated proteins. Activity by the mevalonate kinase ERG12 first converts mevalonate into 5-phosphomevalonate. 5-phosphomevalonate is then further converted to 5-diphosphomevalonate by the phosphomevalonate kinase ERG8. The diphosphomevalonate decarboxylase MVD1/ERG19 then produces isopentenyl diphosphate. The isopentenyl-diphosphate delta-isomerase IDI1 then catalyzes the 1,3-allylic rearrangement of the homoallylic substrate isopentenyl (IPP) to its highly electrophilic allylic isomer, dimethylallyl diphosphate (DMAPP). Finally the farnesyl diphosphate synthase ERG20 catalyzes the sequential condensation of isopentenyl pyrophosphate with dimethylallyl pyrophosphate, and then with the resultant geranylpyrophosphate to the ultimate product farnesyl pyrophosphate. The chain is Farnesyl pyrophosphate synthase (ERG20) from Saccharomyces cerevisiae (strain ATCC 204508 / S288c) (Baker's yeast).